A 386-amino-acid polypeptide reads, in one-letter code: N-acetylneuraminate epimerase (386 aa).

The N-terminal stretch at 1 to 29 (MGMQMKNFKKMMTLMALCLSVAITTSGYA) is a signal peptide. Kelch repeat units follow at residues 51–95 (VIYV…VFLN), 97–149 (ELYV…VKLN), 151–186 (TMVL…KVIY), 187–232 (NYFN…VMEN), 235–284 (LMLI…LAGA), 306–355 (QNYT…SYGD), and 357–386 (VFLI…LLIK). Glutamate 241 (proton acceptor) is an active-site residue.

This sequence belongs to the NanM family. As to quaternary structure, homodimer.

It is found in the periplasm. The catalysed reaction is N-acetyl-alpha-neuraminate = N-acetyl-beta-neuraminate. Functionally, converts alpha-N-acetylneuranimic acid (Neu5Ac) to the beta-anomer, accelerating the equilibrium between the alpha- and beta-anomers. Probably facilitates sialidase-negative bacteria to compete successfully for limited amounts of extracellular Neu5Ac, which is likely taken up in the beta-anomer. In addition, the rapid removal of sialic acid from solution might be advantageous to the bacterium to damp down host responses. This is N-acetylneuraminate epimerase from Salmonella choleraesuis (strain SC-B67).